A 478-amino-acid chain; its full sequence is Serine hydroxymethyltransferase (478 aa).

(6S)-5,6,7,8-tetrahydrofolate-binding positions include L161 and 165-167 (GHL). N6-(pyridoxal phosphate)lysine is present on K273. Residue E291 participates in (6S)-5,6,7,8-tetrahydrofolate binding.

The protein belongs to the SHMT family. Homodimer. Requires pyridoxal 5'-phosphate as cofactor.

Its subcellular location is the cytoplasm. The enzyme catalyses (6R)-5,10-methylene-5,6,7,8-tetrahydrofolate + glycine + H2O = (6S)-5,6,7,8-tetrahydrofolate + L-serine. Its pathway is one-carbon metabolism; tetrahydrofolate interconversion. It participates in amino-acid biosynthesis; glycine biosynthesis; glycine from L-serine: step 1/1. In terms of biological role, catalyzes the reversible interconversion of serine and glycine with tetrahydrofolate (THF) serving as the one-carbon carrier. This reaction serves as the major source of one-carbon groups required for the biosynthesis of purines, thymidylate, methionine, and other important biomolecules. Also exhibits THF-independent aldolase activity toward beta-hydroxyamino acids, producing glycine and aldehydes, via a retro-aldol mechanism. The chain is Serine hydroxymethyltransferase from Salinispora tropica (strain ATCC BAA-916 / DSM 44818 / JCM 13857 / NBRC 105044 / CNB-440).